The sequence spans 741 residues: Catalase-peroxidase (741 aa).

The N-terminal stretch at 1–23 (MLKKIVTALGMSGMLLASSNAIA) is a signal peptide. The segment at residues 102–223 (WHDAGTYRIY…YAATQMGLIY (122 aa)) is a cross-link (tryptophyl-tyrosyl-methioninium (Trp-Tyr) (with M-249)). Residue His103 is the Proton acceptor of the active site. Positions 223–249 (YVNPEGPDGKPDIKGAASEIRQAFRAM) form a cross-link, tryptophyl-tyrosyl-methioninium (Tyr-Met) (with W-102). His264 provides a ligand contact to heme b.

Belongs to the peroxidase family. Peroxidase/catalase subfamily. Homodimer or homotetramer. It depends on heme b as a cofactor. Post-translationally, formation of the three residue Trp-Tyr-Met cross-link is important for the catalase, but not the peroxidase activity of the enzyme.

The catalysed reaction is H2O2 + AH2 = A + 2 H2O. It catalyses the reaction 2 H2O2 = O2 + 2 H2O. Bifunctional enzyme with both catalase and broad-spectrum peroxidase activity. In Francisella tularensis subsp. tularensis (strain FSC 198), this protein is Catalase-peroxidase.